The chain runs to 494 residues: Pre-hexon-linking protein IIIa (494 aa).

The peripentonal hexon-tethering domain stretch occupies residues 1-101; it reads MAALSPTVRA…ALLQRVGRYN (101 aa). The interval 132–245 is binding to hexon-linking protein; sequence GSLVALNGFL…FTDSRTVNGD (114 aa). T268 is modified (phosphothreonine; by host). A phosphoserine; by host mark is found at S439 and S456. The propeptide occupies 484–494; that stretch reads TNPFKHLQPQF.

It belongs to the adenoviridae hexon-linking protein IIIa family. In terms of assembly, interacts with hexon proteins; this interaction tethers the peripentonal hexons to hexons situated in the facet. Interacts with the penton protein (via N-terminus). Interacts with packaging protein 3; this interaction is required to promote correct genome packaging. In terms of processing, cleaved near the C-terminus by the viral protease during virion maturation to form the mature protein.

The protein resides in the virion. It localises to the host nucleus. Its function is as follows. Structural component of the virion that acts as a cement protein on the capsid exterior which mediates the interactions between the hexons, including the peripentonal hexons, and reaches all the way to the penton vertices. Two hexon linking proteins IIIa, one from each facet, stabilize the unique edge interface between a pair of facets. As the virus enters the host cell, hexon linking proteins IIIa are shed concomitant with virion acidification in the endosome. During virus assembly, seems to play a role in the serotype specificity of the packaging of viral DNA via its interaction with packaging protein 3. This chain is Pre-hexon-linking protein IIIa, found in Murine adenovirus A serotype 1 (MAdV-1).